Consider the following 115-residue polypeptide: Large ribosomal subunit protein bL20 (115 aa).

The protein belongs to the bacterial ribosomal protein bL20 family.

Binds directly to 23S ribosomal RNA and is necessary for the in vitro assembly process of the 50S ribosomal subunit. It is not involved in the protein synthesizing functions of that subunit. In Borrelia turicatae (strain 91E135), this protein is Large ribosomal subunit protein bL20.